A 614-amino-acid polypeptide reads, in one-letter code: Leucine-rich repeat and immunoglobulin-like domain-containing nogo receptor-interacting protein 1 (614 aa).

The first 35 residues, 1 to 35, serve as a signal peptide directing secretion; that stretch reads MLAGGVRSMPSPLLACWQPILLLVLGSVLSGSATG. Intrachain disulfides connect Cys-36/Cys-42 and Cys-40/Cys-51. The LRRNT domain occupies 36–65; sequence CPPRCECSAQDRAVLCHRKRFVAVPEGIPT. Residues 36–555 are Extracellular-facing; the sequence is CPPRCECSAQ…FDIKTLIIAT (520 aa). LRR repeat units lie at residues 66–87, 90–111, 114–135, 138–159, 162–183, 186–207, 210–231, 258–279, 282–303, 306–327, and 330–351; these read ETRL…EFAS, HLEE…AFNN, NLRT…VFTG, NLTK…MFQD, NLKS…AFSG, SLEQ…ALSH, GLIV…SFKR, NLTS…AVRH, YLRF…MLHE, RLQE…AFRG, and YLRV…VFHS. Asn-138 is a glycosylation site (N-linked (GlcNAc...) asparagine). Asn-196 carries an N-linked (GlcNAc...) asparagine glycan. N-linked (GlcNAc...) asparagine glycans are attached at residues Asn-258, Asn-268, and Asn-287. Asn-335 carries an N-linked (GlcNAc...) asparagine glycan. An LRRCT domain is found at 363–417; sequence NPLACDCRLLWVFRRRWRLNFNRQQPTCATPEFVQGKEFKDFPDVLLPNYFTCRR. 3 disulfides stabilise this stretch: Cys-367–Cys-390, Cys-369–Cys-415, and Cys-440–Cys-491. The Ig-like C2-type domain occupies 405–507; that stretch reads PDVLLPNYFT…GNDSMPAHLH (103 aa). Residues Asn-486, Asn-499, Asn-520, and Asn-536 are each glycosylated (N-linked (GlcNAc...) asparagine). A helical transmembrane segment spans residues 556-576; the sequence is TMGFISFLGVVLFCLVLLFLW. Residues 577-614 are Cytoplasmic-facing; sequence SRGKGNTKHNIEIEYVPRKSDAGISSADAPRKFNMKMI. At Ser-596 the chain carries Phosphoserine.

As to quaternary structure, homotetramer. Forms a ternary complex with RTN4R/NGFR and RTN4R/TNFRSF19. Interacts with NGRF, RTN4R and MYT1L. Post-translationally, N-glycosylated. Contains predominantly high-mannose glycans.

Its subcellular location is the cell membrane. Its function is as follows. Functional component of the Nogo receptor signaling complex (RTN4R/NGFR) in RhoA activation responsible for some inhibition of axonal regeneration by myelin-associated factors. Is also an important negative regulator of oligodentrocyte differentiation and axonal myelination. Acts in conjunction with RTN4 and RTN4R in regulating neuronal precursor cell motility during cortical development. The protein is Leucine-rich repeat and immunoglobulin-like domain-containing nogo receptor-interacting protein 1 (LINGO1) of Pongo abelii (Sumatran orangutan).